A 390-amino-acid polypeptide reads, in one-letter code: Leu/Ile/Val-binding protein homolog 6 (390 aa).

Residues 1 to 21 (MKKIALTALAVFSLAASAAYA) form the signal peptide.

Belongs to the leucine-binding protein family.

In terms of biological role, component of an amino-acid transport system. The sequence is that of Leu/Ile/Val-binding protein homolog 6 from Brucella abortus (strain 2308).